We begin with the raw amino-acid sequence, 65 residues long: Large ribosomal subunit protein bL35 (65 aa).

Residues 1–47 (MPKIKTNRGAAKRFRKTASGKIKRNSAFTSHILTSKTRKRKRQLRSS) form a disordered region. The segment covering 10 to 24 (AAKRFRKTASGKIKR) has biased composition (basic residues). The span at 26–35 (SAFTSHILTS) shows a compositional bias: polar residues.

It belongs to the bacterial ribosomal protein bL35 family.

In Geobacter metallireducens (strain ATCC 53774 / DSM 7210 / GS-15), this protein is Large ribosomal subunit protein bL35.